The following is a 479-amino-acid chain: Glutamyl-tRNA reductase (479 aa).

Residues 48–51 (TCNR), S104, 109–111 (ERQ), and Q115 contribute to the substrate site. C49 serves as the catalytic Nucleophile. 189–194 (GAGKMG) serves as a coordination point for NADP(+). The disordered stretch occupies residues 417-455 (DAGRSLAEAPDADTPDLGEAPSRCPYMTHDPGGDGTETE).

The protein belongs to the glutamyl-tRNA reductase family. As to quaternary structure, homodimer.

It carries out the reaction (S)-4-amino-5-oxopentanoate + tRNA(Glu) + NADP(+) = L-glutamyl-tRNA(Glu) + NADPH + H(+). It functions in the pathway porphyrin-containing compound metabolism; protoporphyrin-IX biosynthesis; 5-aminolevulinate from L-glutamyl-tRNA(Glu): step 1/2. In terms of biological role, catalyzes the NADPH-dependent reduction of glutamyl-tRNA(Glu) to glutamate 1-semialdehyde (GSA). The polypeptide is Glutamyl-tRNA reductase (Salinibacter ruber (strain DSM 13855 / M31)).